A 456-amino-acid polypeptide reads, in one-letter code: Major facilitator superfamily domain-containing protein 10 (456 aa).

The next 11 membrane-spanning stretches (helical) occupy residues 25 to 45 (VVAV…LLLP), 87 to 107 (VLFG…SAPL), 125 to 145 (LAGV…AAFL), 149 to 169 (VIGG…ADLG), 179 to 199 (AVIG…GAFL), 204 to 224 (VPWL…CFLP), 278 to 298 (LVYF…SFLV), 311 to 328 (KMFF…GAYA), 343 to 363 (AILL…LPIL), 365 to 385 (LGLL…SSVV), and 422 to 442 (LAGA…PFSI).

It belongs to the major facilitator superfamily.

It is found in the nucleus inner membrane. It localises to the cell membrane. Functionally, probable organic anion transporter which may serve as a transporter for some non-steroidal anti-inflammatory drugs (NSAIDs) as well as other organic anions across the luminal membranes of renal proximal tubules at the final excretion step into the urine. The chain is Major facilitator superfamily domain-containing protein 10 (MFSD10) from Bos taurus (Bovine).